Here is a 313-residue protein sequence, read N- to C-terminus: MEIQFDEPKKSLRPKKVNKFKGRNKKSETRDKFVGVRQRPSGRYVAEIKDTTQNIRMWLGTFETAEEAARAYDEAATLLRGSKTRTNFVTHVSYDSPLASRIRHLLNNRKKGTKQQDMNGISSTTSHADTTNDTTSDGSTSSTTNCIGTASGAINSTSASGVTSTSTNISTSASGVASTSTDISTNSSNTNVNDKSESLLSSSTTMQKPNLFEDAYRPDMSNLTNEYESSSYKSNVSWDFGPIFDNFPFDQWLDMTNNDGLLCDMVDKGVSEFERMKVERQISASLYAINGVQEYMKNVQDCNEAQWNLSPLC.

Residues 1–10 (MEIQFDEPKK) show a composition bias toward basic and acidic residues. Residues 1–29 (MEIQFDEPKKSLRPKKVNKFKGRNKKSET) form a disordered region. A compositionally biased stretch (basic residues) spans 11–24 (SLRPKKVNKFKGRN). The segment at residues 32–89 (KFVGVRQRPSGRYVAEIKDTTQNIRMWLGTFETAEEAARAYDEAATLLRGSKTRTNFV) is a DNA-binding region (AP2/ERF). Disordered stretches follow at residues 108 to 143 (NRKK…TSST) and 157 to 204 (TSAS…SSST). 2 stretches are compositionally biased toward low complexity: residues 122 to 143 (SSTT…TSST) and 157 to 193 (TSAS…TNVN).

It belongs to the AP2/ERF transcription factor family. ERF subfamily. As to expression, expressed in roots, root hairs and leaves. Expressed in root epidermis and root hairs.

Its subcellular location is the nucleus. Transcription factor involved in symbiotic nodule signaling in response to rhizobial Nod factors (NFs). Binds to the GCC box (NF-responsive box) of ENOD11 promoter. Acts as a transcriptional activator of NF-responsive box-containing target gene promoters in root hairs. Involved in early stages of root nodule development. Functions redundantly with ERN1. Is essential with ERN1 for the initiation of root hair infection, and nodule organogenesis and development. Required for accurate expression of the NF signaling genes ENOD11 and ENOD12. This Medicago truncatula (Barrel medic) protein is Ethylene-responsive transcription factor ERN2.